The chain runs to 369 residues: Peptide chain release factor 2 (369 aa).

Gln-251 carries the N5-methylglutamine modification.

This sequence belongs to the prokaryotic/mitochondrial release factor family. Post-translationally, methylated by PrmC. Methylation increases the termination efficiency of RF2.

The protein localises to the cytoplasm. Functionally, peptide chain release factor 2 directs the termination of translation in response to the peptide chain termination codons UGA and UAA. The chain is Peptide chain release factor 2 from Acidothermus cellulolyticus (strain ATCC 43068 / DSM 8971 / 11B).